We begin with the raw amino-acid sequence, 151 residues long: MEILGFTVMGGGGSPAWIEVPEKSKSAFWELKRRKVHRYVIFKIDDRREEIVVEKTGAPGESYDDFTASLPADDCRYAVYDLDFVSDDNCRKSKIFFISWSPSVSRIRAKTIYAVSRNQFRHELDGVHFEIQATDPDDMDLEVLRGRANRT.

An ADF-H domain is found at 15-149; that stretch reads PAWIEVPEKS…DLEVLRGRAN (135 aa).

This sequence belongs to the actin-binding proteins ADF family.

Actin-depolymerizing protein. Severs actin filaments (F-actin) and binds to actin monomers. The sequence is that of Actin-depolymerizing factor 10 (ADF10) from Oryza sativa subsp. japonica (Rice).